The primary structure comprises 153 residues: Ribosomal RNA large subunit methyltransferase H (153 aa).

Residues L70, G102, and 121–126 (LSSMTF) each bind S-adenosyl-L-methionine.

Belongs to the RNA methyltransferase RlmH family. Homodimer.

Its subcellular location is the cytoplasm. The enzyme catalyses pseudouridine(1915) in 23S rRNA + S-adenosyl-L-methionine = N(3)-methylpseudouridine(1915) in 23S rRNA + S-adenosyl-L-homocysteine + H(+). Specifically methylates the pseudouridine at position 1915 (m3Psi1915) in 23S rRNA. The chain is Ribosomal RNA large subunit methyltransferase H from Dictyoglomus thermophilum (strain ATCC 35947 / DSM 3960 / H-6-12).